The chain runs to 229 residues: Cytidylate kinase (229 aa).

10-18 provides a ligand contact to ATP; that stretch reads GPAGSGKST.

It belongs to the cytidylate kinase family. Type 1 subfamily.

The protein resides in the cytoplasm. It catalyses the reaction CMP + ATP = CDP + ADP. It carries out the reaction dCMP + ATP = dCDP + ADP. The sequence is that of Cytidylate kinase from Leptospira interrogans serogroup Icterohaemorrhagiae serovar Lai (strain 56601).